Reading from the N-terminus, the 384-residue chain is Alpha-2B adrenergic receptor (384 aa).

Residues Ala1–Leu25 traverse the membrane as a helical segment. At Thr26–Leu36 the chain is on the cytoplasmic side. A helical membrane pass occupies residues Phe37–Leu62. Over Gly63–Cys72 the chain is Extracellular. Cys72 and Cys151 form a disulfide bridge. The chain crosses the membrane as a helical span at residues Glu73–Leu95. Residues Asp96 to Xaa117 are Cytoplasmic-facing. A helical membrane pass occupies residues Gly118–Asp140. The Extracellular segment spans residues Gln141 to Glu156. Residues Ala157–Leu180 traverse the membrane as a helical segment. Residues Arg181–Val348 are Cytoplasmic-facing. The disordered stretch occupies residues Gly193 to Pro306. A compositionally biased stretch (low complexity) spans Pro288 to Pro306. Residues Leu349–Ile372 traverse the membrane as a helical segment. At Cys373–His381 the chain is on the extracellular side. Residues Gly382–Phe384 traverse the membrane as a helical segment.

Belongs to the G-protein coupled receptor 1 family. Adrenergic receptor subfamily. ADRA2B sub-subfamily. In terms of assembly, interacts with RAB26. Interacts with PPP1R9B. Interacts with GGA1, GGA2 and GGA3.

It localises to the cell membrane. Alpha-2 adrenergic receptors mediate the catecholamine-induced inhibition of adenylate cyclase through the action of G proteins. This chain is Alpha-2B adrenergic receptor (ADRA2B), found in Echinops telfairi (Lesser hedgehog tenrec).